Here is a 288-residue protein sequence, read N- to C-terminus: Glycine--tRNA ligase alpha subunit (288 aa).

The protein belongs to the class-II aminoacyl-tRNA synthetase family. As to quaternary structure, tetramer of two alpha and two beta subunits.

It localises to the cytoplasm. It carries out the reaction tRNA(Gly) + glycine + ATP = glycyl-tRNA(Gly) + AMP + diphosphate. This is Glycine--tRNA ligase alpha subunit from Rickettsia massiliae (strain Mtu5).